Consider the following 84-residue polypeptide: Dihydroneopterin aldolase (84 aa).

Residues Glu-22, Tyr-54, and Ile-73–Glu-74 each bind substrate.

The protein belongs to the DHNA family.

It catalyses the reaction 7,8-dihydroneopterin = 6-hydroxymethyl-7,8-dihydropterin + glycolaldehyde. It carries out the reaction 7,8-dihydroneopterin = 7,8-dihydromonapterin. The protein operates within cofactor biosynthesis; tetrahydrofolate biosynthesis; 2-amino-4-hydroxy-6-hydroxymethyl-7,8-dihydropteridine diphosphate from 7,8-dihydroneopterin triphosphate: step 3/4. Its function is as follows. Catalyzes the conversion of 7,8-dihydroneopterin to 6-hydroxymethyl-7,8-dihydropterin. Can also catalyze the epimerization of carbon 2' of dihydroneopterin to dihydromonapterin. The polypeptide is Dihydroneopterin aldolase (folB) (Staphylococcus haemolyticus).